Consider the following 109-residue polypeptide: Small ribosomal subunit protein uS17 (109 aa).

Belongs to the universal ribosomal protein uS17 family. Part of the 30S ribosomal subunit.

In terms of biological role, one of the primary rRNA binding proteins, it binds specifically to the 5'-end of 16S ribosomal RNA. The protein is Small ribosomal subunit protein uS17 of Methanococcoides burtonii (strain DSM 6242 / NBRC 107633 / OCM 468 / ACE-M).